Here is a 219-residue protein sequence, read N- to C-terminus: GTP-binding protein Rit1 (219 aa).

GTP is bound by residues 28–35 (GAGGVGKS), 75–79 (DTAGQ), and 134–137 (NKSD).

This sequence belongs to the small GTPase superfamily. Ras family. Interacts with AFDN, the C-terminal domain of RALGDS and RLF, but not with RIN1 and PIK3CA. RLF binds exclusively to the active GTP-bound form. Strongly interacts with BRAF, but only weakly with RAF1. BARF and RAF1 association is dependent upon the GTP-bound state. Interacts with RGL3. As to expression, expressed in many tissues.

The protein resides in the cell membrane. It catalyses the reaction GTP + H2O = GDP + phosphate + H(+). Alternates between an inactive form bound to GDP and an active form bound to GTP. In terms of biological role, plays a crucial role in coupling NGF stimulation to the activation of both EPHB2 and MAPK14 signaling pathways and in NGF-dependent neuronal differentiation. Involved in ELK1 transactivation through the Ras-MAPK signaling cascade that mediates a wide variety of cellular functions, including cell proliferation, survival, and differentiation. The polypeptide is GTP-binding protein Rit1 (Rit1) (Mus musculus (Mouse)).